The following is a 360-amino-acid chain: sn-glycerol-3-phosphate import ATP-binding protein UgpC (360 aa).

The 232-residue stretch at 4-235 (LSLKGVRKSY…PATTFVASFI (232 aa)) folds into the ABC transporter domain. 37 to 44 (GPSGCGKS) is a binding site for ATP.

It belongs to the ABC transporter superfamily. sn-glycerol-3-phosphate importer (TC 3.A.1.1.3) family. In terms of assembly, the complex is composed of two ATP-binding proteins (UgpC), two transmembrane proteins (UgpA and UgpE) and a solute-binding protein (UgpB).

It is found in the cell inner membrane. The enzyme catalyses sn-glycerol 3-phosphate(out) + ATP + H2O = sn-glycerol 3-phosphate(in) + ADP + phosphate + H(+). Its function is as follows. Part of the ABC transporter complex UgpBAEC involved in sn-glycerol-3-phosphate (G3P) import. Responsible for energy coupling to the transport system. This is sn-glycerol-3-phosphate import ATP-binding protein UgpC from Burkholderia thailandensis (strain ATCC 700388 / DSM 13276 / CCUG 48851 / CIP 106301 / E264).